A 548-amino-acid chain; its full sequence is Alpha-1,3-mannosyl-glycoprotein 4-beta-N-acetylglucosaminyltransferase B (548 aa).

At 1–7 (MRLRNGT) the chain is on the cytoplasmic side. A helical; Signal-anchor for type II membrane protein membrane pass occupies residues 8–28 (FLTLLLFCLCAFLSLSWYAAL). At 29-548 (SGQKGDVVDI…LSEIFLKKAD (520 aa)) the chain is on the lumenal side. The stretch at 36-83 (VDIYQREFLALRDRLHAAEQESLKRSKELNLVLEEIKRAVSERQALRD) forms a coiled coil. N-linked (GlcNAc...) asparagine glycosylation is found at N87 and N103.

The protein belongs to the glycosyltransferase 54 family. As to quaternary structure, interacts with SLC35A3. It depends on a divalent metal cation as a cofactor. N-glycosylated.

It is found in the golgi apparatus membrane. It carries out the reaction N(4)-{beta-D-GlcNAc-(1-&gt;2)-alpha-D-Man-(1-&gt;3)-[beta-D-GlcNAc-(1-&gt;2)-alpha-D-Man-(1-&gt;6)]-beta-D-Man-(1-&gt;4)-beta-D-GlcNAc-(1-&gt;4)-beta-D-GlcNAc}-L-asparaginyl-[protein] + UDP-N-acetyl-alpha-D-glucosamine = N(4)-{beta-D-GlcNAc-(1-&gt;2)-[beta-D-GlcNAc-(1-&gt;4)]-alpha-D-Man-(1-&gt;3)-[beta-D-GlcNAc-(1-&gt;2)-alpha-D-Man-(1-&gt;6)]-beta-D-Man-(1-&gt;4)-beta-D-GlcNAc-(1-&gt;4)-beta-D-GlcNAc}-L-asparaginyl-[protein] + UDP + H(+). The enzyme catalyses an N(4)-{beta-D-GlcNAc-(1-&gt;2)-alpha-D-Man-(1-&gt;3)-[alpha-D-Man-(1-&gt;6)]-beta-D-Man-(1-&gt;4)-beta-D-GlcNAc-(1-&gt;4)-beta-D-GlcNAc}-L-asparaginyl-[protein] + UDP-N-acetyl-alpha-D-glucosamine = an N(4)-{beta-D-GlcNAc-(1-&gt;2)-[beta-D-GlcNAc-(1-&gt;4)]-alpha-D-Man-(1-&gt;3)-[alpha-D-Man-(1-&gt;6)]-beta-D-Man-(1-&gt;4)-beta-D-GlcNAc-(1-&gt;4)-beta-D-GlcNAc}-L-asparaginyl-[protein] + UDP + H(+). The catalysed reaction is an N(4)-{beta-D-GlcNAc-(1-&gt;2)-alpha-D-Man-(1-&gt;3)-[beta-D-GlcNAc-(1-&gt;2)-[beta-D-GlcNAc-(1-&gt;6)]-alpha-D-Man-(1-&gt;6)]-beta-D-Man-(1-&gt;4)-beta-D-GlcNAc-(1-&gt;4)-beta-D-GlcNAc}-L-asparaginyl-[protein] + UDP-N-acetyl-alpha-D-glucosamine = an N(4)-{beta-D-GlcNAc-(1-&gt;2)-[beta-D-GlcNAc-(1-&gt;4)]-alpha-D-Man-(1-&gt;3)-[beta-D-GlcNAc-(1-&gt;2)-[beta-D-GlcNAc-(1-&gt;6)]-alpha-D-Man-(1-&gt;6)]-beta-D-Man-(1-&gt;4)-beta-D-GlcNAc-(1-&gt;4)-beta-D-GlcNAc}-L-asparaginyl-[protein] + UDP + H(+). It catalyses the reaction an N(4)-{beta-D-GlcNAc-(1-&gt;2)-alpha-D-Man-(1-&gt;3)-[beta-D-GlcNAc-(1-&gt;2)-alpha-D-Man-(1-&gt;6)]-beta-D-Man-(1-&gt;4)-beta-D-GlcNAc-(1-&gt;4)-[alpha-L-Fuc-(1-&gt;6)]-beta-D-GlcNAc}-L-asparaginyl-[protein] + UDP-N-acetyl-alpha-D-glucosamine = N(4)-{beta-D-GlcNAc-(1-&gt;2)-[beta-D-GlcNAc-(1-&gt;4)]-alpha-D-Man-(1-&gt;3)-[beta-D-GlcNAc-(1-&gt;2)-alpha-D-Man-(1-&gt;6)]-beta-D-Man-(1-&gt;4)-beta-D-GlcNAc-(1-&gt;4)-[alpha-L-Fuc-(1-&gt;6)]-beta-D-GlcNAc}-asparaginyl-[protein] + UDP + H(+). It carries out the reaction an N(4)-{beta-D-GlcNAc-(1-&gt;2)-alpha-D-Man-(1-&gt;3)-[beta-D-Gal-(1-&gt;4)-beta-D-GlcNAc-(1-&gt;2)-alpha-D-Man-(1-&gt;6)]-beta-D-Man-(1-&gt;4)-beta-D-GlcNAc-(1-&gt;4)-beta-D-GlcNAc}-L-asparaginyl-[protein] + UDP-N-acetyl-alpha-D-glucosamine = an N(4)-{beta-D-GlcNAc-(1-&gt;2)-[beta-D-GlcNAc-(1-&gt;4)]-alpha-D-Man-(1-&gt;3)-[beta-D-Gal-(1-&gt;4)-beta-D-GlcNAc-(1-&gt;2)-alpha-D-Man-(1-&gt;6)]-beta-D-Man-(1-&gt;4)-beta-D-GlcNAc-(1-&gt;4)-beta-D-GlcNAc}-L-asparaginyl-[protein] + UDP + H(+). The enzyme catalyses N(4)-{beta-D-GlcNAc-(1-&gt;2)-alpha-D-Man-(1-&gt;3)-[alpha-D-Man-(1-&gt;3)-{alpha-D-Man-(1-&gt;6)}-alpha-D-Man-(1-&gt;6)]-beta-D-Man-(1-&gt;4)-beta-D-GlcNAc-(1-&gt;4)-beta-D-GlcNAc}-asparaginyl-[protein] + UDP-N-acetyl-alpha-D-glucosamine = N(4)-{beta-D-GlcNAc-(1-&gt;2)-[beta-D-GlcNAc-(1-&gt;4)]-alpha-D-Man-(1-&gt;3)-[alpha-D-Man-(1-&gt;3)-{alpha-D-Man-(1-&gt;6)}-alpha-D-Man-(1-&gt;6)]-beta-D-Man-(1-&gt;4)-beta-D-GlcNAc-(1-&gt;4)-beta-D-GlcNAc}-asparaginyl-[protein] + UDP + H(+). The catalysed reaction is N(4)-{beta-D-GlcNAc-(1-&gt;2)-alpha-D-Man-(1-&gt;3)-beta-D-Man-(1-&gt;4)-beta-D-GlcNAc-(1-&gt;4)-beta-D-GlcNAc}-asparaginyl-[protein] + UDP-N-acetyl-alpha-D-glucosamine = N(4)-{beta-D-GlcNAc-(1-&gt;2)-[beta-D-GlcNAc-(1-&gt;4)]-alpha-D-Man-(1-&gt;3)-beta-D-Man-(1-&gt;4)-beta-D-GlcNAc-(1-&gt;4)-beta-D-GlcNAc}-asparaginyl-[protein] + UDP + H(+). Its pathway is protein modification; protein glycosylation. Its function is as follows. Glycosyltransferase that catalyzes the transfer of GlcNAc from UDP-GlcNAc to the GlcNAcbeta1-2Manalpha1-3 arm of the core structure of N-linked glycans through a beta1-4 linkage and participates in the production of tri- and tetra-antennary N-linked sugar chains. Prefers complex-type N-glycans over hybrid-types. Has lower affinities for donors or acceptors than MGAT4A, suggesting that, under physiological conditions, it is not the main contributor in N-glycan biosynthesis. This chain is Alpha-1,3-mannosyl-glycoprotein 4-beta-N-acetylglucosaminyltransferase B, found in Mus musculus (Mouse).